Here is a 268-residue protein sequence, read N- to C-terminus: Type III pantothenate kinase 1 (268 aa).

6 to 13 (DIGNTNIT) serves as a coordination point for ATP. Substrate-binding positions include Y100 and 107-110 (GTDR). D109 acts as the Proton acceptor in catalysis. D133 serves as a coordination point for K(+). T136 is a binding site for ATP.

This sequence belongs to the type III pantothenate kinase family. As to quaternary structure, homodimer. The cofactor is NH4(+). It depends on K(+) as a cofactor.

The protein resides in the cytoplasm. The catalysed reaction is (R)-pantothenate + ATP = (R)-4'-phosphopantothenate + ADP + H(+). Its pathway is cofactor biosynthesis; coenzyme A biosynthesis; CoA from (R)-pantothenate: step 1/5. Its function is as follows. Catalyzes the phosphorylation of pantothenate (Pan), the first step in CoA biosynthesis. This chain is Type III pantothenate kinase 1, found in Symbiobacterium thermophilum (strain DSM 24528 / JCM 14929 / IAM 14863 / T).